A 449-amino-acid polypeptide reads, in one-letter code: Exodeoxyribonuclease 7 large subunit (449 aa).

The protein belongs to the XseA family. Heterooligomer composed of large and small subunits.

Its subcellular location is the cytoplasm. It carries out the reaction Exonucleolytic cleavage in either 5'- to 3'- or 3'- to 5'-direction to yield nucleoside 5'-phosphates.. In terms of biological role, bidirectionally degrades single-stranded DNA into large acid-insoluble oligonucleotides, which are then degraded further into small acid-soluble oligonucleotides. This Latilactobacillus sakei subsp. sakei (strain 23K) (Lactobacillus sakei subsp. sakei) protein is Exodeoxyribonuclease 7 large subunit.